Reading from the N-terminus, the 525-residue chain is Cytochrome P450 4V2 (525 aa).

A helical transmembrane segment spans residues 13-33; it reads LLLWGAASAVSVAGATVLLNI. Residues glutamate 329 and cysteine 467 each contribute to the heme site.

Belongs to the cytochrome P450 family. Requires heme as cofactor.

The protein resides in the endoplasmic reticulum membrane. The enzyme catalyses dodecanoate + reduced [NADPH--hemoprotein reductase] + O2 = 12-hydroxydodecanoate + oxidized [NADPH--hemoprotein reductase] + H2O + H(+). It catalyses the reaction tetradecanoate + reduced [NADPH--hemoprotein reductase] + O2 = 14-hydroxytetradecanoate + oxidized [NADPH--hemoprotein reductase] + H2O + H(+). It carries out the reaction hexadecanoate + reduced [NADPH--hemoprotein reductase] + O2 = 16-hydroxyhexadecanoate + oxidized [NADPH--hemoprotein reductase] + H2O + H(+). The catalysed reaction is (5Z,8Z,11Z,14Z,17Z)-eicosapentaenoate + reduced [NADPH--hemoprotein reductase] + O2 = 20-hydroxy-(5Z,8Z,11Z,14Z,17Z)-eicosapentaenoate + oxidized [NADPH--hemoprotein reductase] + H2O + H(+). The enzyme catalyses (4Z,7Z,10Z,13Z,16Z,19Z)-docosahexaenoate + reduced [NADPH--hemoprotein reductase] + O2 = 22-hydroxy-(4Z,7Z,10Z,13Z,16Z,19Z)-docosahexaenoate + oxidized [NADPH--hemoprotein reductase] + H2O + H(+). It functions in the pathway lipid metabolism; fatty acid metabolism. Inhibited by N-hydroxy-N'-(4-n-butyl-2-methylphenyl formamidine)(HET0016) with an IC(50) of 38 nM. In terms of biological role, a cytochrome P450 monooxygenase involved in fatty acid metabolism in the eye. Catalyzes the omega-hydroxylation of polyunsaturated fatty acids (PUFAs) docosahexaenoate (DHA) and its precursor eicosapentaenoate (EPA), and may contribute to the homeostasis of these retinal PUFAs. Omega hydroxylates saturated fatty acids such as laurate, myristate and palmitate, the catalytic efficiency decreasing in the following order: myristate &gt; laurate &gt; palmitate (C14&gt;C12&gt;C16). Mechanistically, uses molecular oxygen inserting one oxygen atom into a substrate, and reducing the second into a water molecule, with two electrons provided by NADPH via cytochrome P450 reductase (CPR; NADPH-ferrihemoprotein reductase). The chain is Cytochrome P450 4V2 (Cyp4v2) from Rattus norvegicus (Rat).